We begin with the raw amino-acid sequence, 339 residues long: Methylcobamide:CoM methyltransferase MtbA (339 aa).

Positions 239, 241, and 316 each coordinate Zn(2+).

It belongs to the uroporphyrinogen decarboxylase family. MtbA/MtaA subfamily. The cofactor is Zn(2+).

It catalyses the reaction methyl-Co(III)-[methylamine-specific corrinoid protein] + coenzyme M = Co(I)-[methylamine-specific corrinoid protein] + methyl-coenzyme M + H(+). It participates in one-carbon metabolism; methanogenesis from methylated amine. Functionally, methyltransferase involved in methanogenesis from methylamines methanol pathway. Catalyzes the transfer of the methyl group from the methylated corrinoid protein MtmC (MtmC1 or MtmC2) to coenzyme M, forming the substrate for coenzyme-B sulfoethylthiotransferase. The sequence is that of Methylcobamide:CoM methyltransferase MtbA (mtbA) from Methanosarcina mazei (strain ATCC BAA-159 / DSM 3647 / Goe1 / Go1 / JCM 11833 / OCM 88) (Methanosarcina frisia).